The sequence spans 427 residues: Acyl-lipid 8-desaturase (427 aa).

A disordered region spans residues 1–24; sequence MGRGGDSSGQAHPAAELAVPSDRA. One can recognise a Cytochrome b5 heme-binding domain in the interval 36–84; it reads IVLYGKRVDVTKFQRTHPGGSKVFRIFQDRDATEQFESYHSKRAIKMME. Positions 52 and 75 each coordinate heme. The Histidine box-1 motif lies at 178–182; the sequence is HSVFK. The helical transmembrane segment at 189–209 threads the bilayer; the sequence is VGWNNAAGYFLGFVQGYAVEW. The short motif at 213–218 is the Histidine box-2 element; that stretch reads RHNTHH. Transmembrane regions (helical) follow at residues 261-281 and 286-306; these read VPVMAILDLYWRLESIAYVAM and MLPQALALVAHYAIVAWVFAG. A Histidine box-3 motif is present at residues 373–377; the sequence is QTEHH.

This sequence belongs to the fatty acid desaturase type 1 family. Requires Fe(2+) as cofactor.

It is found in the membrane. Functionally, fatty acid desaturase that introduces a cis double bond at the 8-position in 20-carbon polyunsaturated fatty acids incorporated in a glycerolipid that contain a Delta(8) double bond to yield (20:4(8,11,14,17)). The polypeptide is Acyl-lipid 8-desaturase (Rebecca salina (Marine microalga)).